The following is a 378-amino-acid chain: tRNA-specific 2-thiouridylase MnmA (378 aa).

ATP-binding positions include 9–16 (GVSGGVDS) and methionine 35. An interaction with target base in tRNA region spans residues 94 to 96 (NPD). Cysteine 99 functions as the Nucleophile in the catalytic mechanism. A disulfide bridge links cysteine 99 with cysteine 195. Glycine 123 is a binding site for ATP. Residues 145 to 147 (KDQ) are interaction with tRNA. Cysteine 195 (cysteine persulfide intermediate) is an active-site residue. The interaction with tRNA stretch occupies residues 307–308 (RY).

It belongs to the MnmA/TRMU family.

The protein resides in the cytoplasm. The catalysed reaction is S-sulfanyl-L-cysteinyl-[protein] + uridine(34) in tRNA + AH2 + ATP = 2-thiouridine(34) in tRNA + L-cysteinyl-[protein] + A + AMP + diphosphate + H(+). Functionally, catalyzes the 2-thiolation of uridine at the wobble position (U34) of tRNA, leading to the formation of s(2)U34. The protein is tRNA-specific 2-thiouridylase MnmA of Xanthomonas euvesicatoria pv. vesicatoria (strain 85-10) (Xanthomonas campestris pv. vesicatoria).